Reading from the N-terminus, the 208-residue chain is FMN-dependent NADH:quinone oxidoreductase 4 (208 aa).

This sequence belongs to the azoreductase type 1 family. As to quaternary structure, homodimer. It depends on FMN as a cofactor.

The enzyme catalyses 2 a quinone + NADH + H(+) = 2 a 1,4-benzosemiquinone + NAD(+). It catalyses the reaction N,N-dimethyl-1,4-phenylenediamine + anthranilate + 2 NAD(+) = 2-(4-dimethylaminophenyl)diazenylbenzoate + 2 NADH + 2 H(+). Functionally, quinone reductase that provides resistance to thiol-specific stress caused by electrophilic quinones. Also exhibits azoreductase activity. Catalyzes the reductive cleavage of the azo bond in aromatic azo compounds to the corresponding amines. The sequence is that of FMN-dependent NADH:quinone oxidoreductase 4 from Bacillus cereus (strain ZK / E33L).